We begin with the raw amino-acid sequence, 342 residues long: N-acetyl-gamma-glutamyl-phosphate reductase (342 aa).

Residue Cys149 is part of the active site.

The protein belongs to the NAGSA dehydrogenase family. Type 1 subfamily.

The protein resides in the cytoplasm. The catalysed reaction is N-acetyl-L-glutamate 5-semialdehyde + phosphate + NADP(+) = N-acetyl-L-glutamyl 5-phosphate + NADPH + H(+). The protein operates within amino-acid biosynthesis; L-arginine biosynthesis; N(2)-acetyl-L-ornithine from L-glutamate: step 3/4. Its function is as follows. Catalyzes the NADPH-dependent reduction of N-acetyl-5-glutamyl phosphate to yield N-acetyl-L-glutamate 5-semialdehyde. In Paracoccus denitrificans (strain Pd 1222), this protein is N-acetyl-gamma-glutamyl-phosphate reductase.